Reading from the N-terminus, the 199-residue chain is uncharacterized protein (199 aa).

The next 3 helical transmembrane spans lie at 22–44 (VVVV…YLFL), 65–87 (TGFI…HLAL), and 91–108 (HTIT…FFFW).

The protein belongs to the ycf1 family.

Its subcellular location is the mitochondrion membrane. This is an uncharacterized protein from Arabidopsis thaliana (Mouse-ear cress).